The sequence spans 509 residues: Aldehyde dehydrogenase 1A1 (509 aa).

NAD(+) is bound by residues 175-178 (IPWN), 201-204 (KPAE), 234-235 (GP), 254-255 (GS), and 277-279 (ELG). E277 serves as the catalytic Proton acceptor. C311 functions as the Nucleophile in the catalytic mechanism. NAD(+)-binding positions include 357–361 (EQFQK) and 408–410 (EIF).

The protein belongs to the aldehyde dehydrogenase family. Homotetramer.

It is found in the cytoplasm. The protein resides in the cytosol. The protein localises to the cell projection. Its subcellular location is the axon. It carries out the reaction an aldehyde + NAD(+) + H2O = a carboxylate + NADH + 2 H(+). The catalysed reaction is all-trans-retinal + NAD(+) + H2O = all-trans-retinoate + NADH + 2 H(+). It catalyses the reaction 9-cis-retinal + NAD(+) + H2O = 9-cis-retinoate + NADH + 2 H(+). The enzyme catalyses 11-cis-retinal + NAD(+) + H2O = 11-cis-retinoate + NADH + 2 H(+). It carries out the reaction 13-cis-retinal + NAD(+) + H2O = 13-cis-retinoate + NADH + 2 H(+). The catalysed reaction is 3-deoxyglucosone + NAD(+) + H2O = 2-dehydro-3-deoxy-D-gluconate + NADH + 2 H(+). It catalyses the reaction (E)-4-hydroxynon-2-enal + NAD(+) + H2O = (E)-4-hydroxynon-2-enoate + NADH + 2 H(+). The enzyme catalyses malonaldehyde + NAD(+) + H2O = 3-oxopropanoate + NADH + 2 H(+). It carries out the reaction hexanal + NAD(+) + H2O = hexanoate + NADH + 2 H(+). The catalysed reaction is propanal + NAD(+) + H2O = propanoate + NADH + 2 H(+). It catalyses the reaction acetaldehyde + NAD(+) + H2O = acetate + NADH + 2 H(+). The enzyme catalyses benzaldehyde + NAD(+) + H2O = benzoate + NADH + 2 H(+). It carries out the reaction 4-aminobutanal + NAD(+) + H2O = 4-aminobutanoate + NADH + 2 H(+). It functions in the pathway cofactor metabolism; retinol metabolism. Its function is as follows. Cytosolic dehydrogenase that catalyzes the irreversible oxidation of a wide range of aldehydes to their corresponding carboxylic acid. Functions downstream of retinol dehydrogenases and catalyzes the oxidation of retinaldehyde into retinoic acid, the second step in the oxidation of retinol/vitamin A into retinoic acid. This pathway is crucial to control the levels of retinol and retinoic acid, two important molecules which excess can be teratogenic and cytotoxic. Also oxidizes aldehydes resulting from lipid peroxidation like (E)-4-hydroxynon-2-enal/HNE, malonaldehyde and hexanal that form protein adducts and are highly cytotoxic. By participating for instance to the clearance of (E)-4-hydroxynon-2-enal/HNE in the lens epithelium prevents the formation of HNE-protein adducts and lens opacification. Also functions downstream of fructosamine-3-kinase in the fructosamine degradation pathway by catalyzing the oxidation of 3-deoxyglucosone, the carbohydrate product of fructosamine 3-phosphate decomposition, which is itself a potent glycating agent that may react with lysine and arginine side-chains of proteins. Also has an aminobutyraldehyde dehydrogenase activity and is probably part of an alternative pathway for the biosynthesis of GABA/4-aminobutanoate in midbrain, thereby playing a role in GABAergic synaptic transmission. This Gallus gallus (Chicken) protein is Aldehyde dehydrogenase 1A1.